A 1071-amino-acid polypeptide reads, in one-letter code: ATP-dependent helicase/deoxyribonuclease subunit B (1071 aa).

The protein belongs to the helicase family. AddB/RexB type 2 subfamily. In terms of assembly, heterodimer of AddA and RexB. Mg(2+) serves as cofactor.

In terms of biological role, the heterodimer acts as both an ATP-dependent DNA helicase and an ATP-dependent, dual-direction single-stranded exonuclease. Recognizes the chi site generating a DNA molecule suitable for the initiation of homologous recombination. This subunit has 5' -&gt; 3' nuclease activity but not helicase activity. This chain is ATP-dependent helicase/deoxyribonuclease subunit B, found in Streptococcus pyogenes serotype M6 (strain ATCC BAA-946 / MGAS10394).